Reading from the N-terminus, the 257-residue chain is Large ribosomal subunit protein uL3 (257 aa).

The disordered stretch occupies residues leucine 232–lysine 257.

It belongs to the universal ribosomal protein uL3 family. In terms of assembly, part of the 50S ribosomal subunit. Forms a cluster with proteins L14 and L19.

Its function is as follows. One of the primary rRNA binding proteins, it binds directly near the 3'-end of the 23S rRNA, where it nucleates assembly of the 50S subunit. This is Large ribosomal subunit protein uL3 from Mycoplasma genitalium (strain ATCC 33530 / DSM 19775 / NCTC 10195 / G37) (Mycoplasmoides genitalium).